Here is a 101-residue protein sequence, read N- to C-terminus: MAKQSMKAREVKRVALADKYFAKRAELKAIISDVNASDEDRWNAVLKLQTLPRDSSPSRQRNRCRQTGRPHGFLRKFGLSRIKVREAAMRGEIPGLKKASW.

It belongs to the universal ribosomal protein uS14 family. As to quaternary structure, part of the 30S ribosomal subunit. Contacts proteins S3 and S10.

Its function is as follows. Binds 16S rRNA, required for the assembly of 30S particles and may also be responsible for determining the conformation of the 16S rRNA at the A site. The polypeptide is Small ribosomal subunit protein uS14 (Escherichia coli O139:H28 (strain E24377A / ETEC)).